Consider the following 75-residue polypeptide: UPF0352 protein YejL (75 aa).

The protein belongs to the UPF0352 family.

The polypeptide is UPF0352 protein YejL (Salmonella arizonae (strain ATCC BAA-731 / CDC346-86 / RSK2980)).